We begin with the raw amino-acid sequence, 565 residues long: Tyrosine-protein phosphatase non-receptor type 5 (565 aa).

Residues Met1–Asp16 are compositionally biased toward basic and acidic residues. The tract at residues Met1 to His80 is disordered. The segment covering Met56–Arg75 has biased composition (pro residues). 2 helical membrane-spanning segments follow: residues Leu88–Tyr108 and Leu146–Leu166. A disordered region spans residues Pro169–Pro189. Ser245 bears the Phosphoserine; by PKA mark. Thr255 bears the Phosphothreonine; by MAPK mark. Position 268 is a phosphoserine; by MAPK (Ser268). In terms of domain architecture, Tyrosine-protein phosphatase spans Leu300–Tyr555. Substrate contacts are provided by residues Asp461, Cys496 to Arg502, and Gln540. Catalysis depends on Cys496, which acts as the Phosphocysteine intermediate.

The protein belongs to the protein-tyrosine phosphatase family. Non-receptor class subfamily. In terms of processing, phosphorylation at Ser-245 by PKA deactivates PTPN5. Phosphorylation at Thr-255 and Ser-268 by MAPKs stabilizes the phosphatase, dephosphorylation of these sites results in ubiquitin-mediated degradation of the active phosphatase.

The protein localises to the endoplasmic reticulum membrane. The enzyme catalyses O-phospho-L-tyrosyl-[protein] + H2O = L-tyrosyl-[protein] + phosphate. In terms of biological role, may regulate the activity of several effector molecules involved in synaptic plasticity and neuronal cell survival, including MAPKs, Src family kinases and NMDA receptors. This chain is Tyrosine-protein phosphatase non-receptor type 5 (PTPN5), found in Homo sapiens (Human).